We begin with the raw amino-acid sequence, 282 residues long: E3 ubiquitin-protein ligase SIAH1 (282 aa).

Residues 1–17 (MSRQTATALPTGTSKCP) are compositionally biased toward polar residues. The segment at 1–22 (MSRQTATALPTGTSKCPPSQRV) is disordered. Ser-19 carries the post-translational modification Phosphoserine; by ATM and ATR. Residues 41–76 (CPVCFDYVLPPILQCQSGHLVCSNCRPKLTCCPTCR) form an RING-type zinc finger. The segment at 90 to 282 (VANSVLFPCK…LGINVTISMC (193 aa)) is SBD. The segment at 93 to 153 (SVLFPCKYAS…VMPHLMHQHK (61 aa)) adopts an SIAH-type zinc-finger fold. Zn(2+) contacts are provided by Cys-98, Cys-105, His-117, Cys-121, Cys-128, Cys-135, His-147, and His-152.

Belongs to the SINA (Seven in absentia) family. In terms of assembly, homodimer. Interacts with group 1 glutamate receptors GRM1 and GRM5. Interacts with DAB1, which may inhibit its activity. Interacts with UBE2E2. Interacts with PEG3. Interacts with GAPDH; leading to stabilize SIAH1. Component of some large E3 complex composed of UBE2D1, SIAH1, CACYBP/SIP, SKP1, APC and TBL1X. Interacts with UBE2I. Interacts with alpha-tubulin. Interacts with PEG10, which may inhibit its activity. Interacts with KHDRBS3. Interacts with SNCAIP. Interacts with HIPK2; the interaction is promoted by DAZAP2 and results in SIAH1-mediated ubiquitination and subsequent proteasomal degradation of HIPK2. Interacts with DAZAP2; the interaction is decreased following phosphorylation of DAZAP2 by HIPK2. Interacts with Bassoon/BSN and Piccolo/PLCO; these interactions negatively regulate SIAH1 E3 ligase activity. Interacts with DCC. Interacts with AXIN1; catalyzes AXIN1 ubiquitination and subsequent proteasome-mediated ubiquitin-dependent degradation. In terms of processing, phosphorylated on Ser-19 by ATM and ATR. This phosphorylation disrupts SIAH1 interaction with HIPK2, and subsequent proteasomal degradation of HIPK2. Widely expressed at a low level. Down-regulated in advanced hepatocellular carcinomas.

The protein localises to the cytoplasm. The protein resides in the nucleus. The catalysed reaction is S-ubiquitinyl-[E2 ubiquitin-conjugating enzyme]-L-cysteine + [acceptor protein]-L-lysine = [E2 ubiquitin-conjugating enzyme]-L-cysteine + N(6)-ubiquitinyl-[acceptor protein]-L-lysine.. It functions in the pathway protein modification; protein ubiquitination. Inhibited by interaction with SNCAIP (isoform 2, but not isoform 1). May be inhibited by interaction with PEG10. Its function is as follows. E3 ubiquitin-protein ligase that mediates ubiquitination and subsequent proteasomal degradation of target proteins. E3 ubiquitin ligases accept ubiquitin from an E2 ubiquitin-conjugating enzyme in the form of a thioester and then directly transfers the ubiquitin to targeted substrates. Mediates E3 ubiquitin ligase activity either through direct binding to substrates or by functioning as the essential RING domain subunit of larger E3 complexes. Triggers the ubiquitin-mediated degradation of many substrates, including proteins involved in transcription regulation (ELL2, MYB, POU2AF1, PML and RBBP8), a cell surface receptor (DCC), the cell-surface receptor-type tyrosine kinase FLT3, the cytoplasmic signal transduction molecules (KLF10/TIEG1 and NUMB), an antiapoptotic protein (BAG1), a microtubule motor protein (KIF22), a protein involved in synaptic vesicle function in neurons (SYP), a structural protein (CTNNB1) and SNCAIP. Confers constitutive instability to HIPK2 through proteasomal degradation. It is thereby involved in many cellular processes such as apoptosis, tumor suppression, cell cycle, axon guidance, transcription regulation, spermatogenesis and TNF-alpha signaling. Has some overlapping function with SIAH2. Induces apoptosis in cooperation with PEG3. Upon nitric oxid (NO) generation that follows apoptotic stimulation, interacts with S-nitrosylated GAPDH, mediating the translocation of GAPDH to the nucleus. GAPDH acts as a stabilizer of SIAH1, facilitating the degradation of nuclear proteins. Mediates ubiquitination and degradation of EGLN2 and EGLN3 in response to the unfolded protein response (UPR), leading to their degradation and subsequent stabilization of ATF4. Also part of the Wnt signaling pathway in which it mediates the Wnt-induced ubiquitin-mediated proteasomal degradation of AXIN1. The polypeptide is E3 ubiquitin-protein ligase SIAH1 (SIAH1) (Homo sapiens (Human)).